The primary structure comprises 857 residues: Zinc finger protein 574 (857 aa).

14 C2H2-type zinc fingers span residues 15–37, 58–80, 99–121, 206–228, 297–319, 324–346, 352–374, 380–401, 428–451, 457–479, 485–507, 513–535, 541–563, and 569–591; these read YVCS…QQSH, YQCL…QELH, YECP…RYTH, YKCS…QGTH, FSCG…QISH, FSCP…LKSH, YLCV…RRSH, FTCE…RRVH, FHCD…RFVH, HKCP…MLTH, YSCT…RLTH, YKCQ…QYVH, YKCN…QYHH, and YKCQ…QLGH. Residues 597–619 form a C2H2-type 15; degenerate zinc finger; the sequence is HRCRECGTNFPSVQRLQDHRCSK. 5 C2H2-type zinc fingers span residues 628–651, 681–703, 709–731, 737–759, and 765–787; these read LECP…AAQH, LECS…RRIH, YPCP…RRLH, FKCD…KRIH, and HSCP…RKLH. Residues 648–678 are disordered; the sequence is AAQHSGNKRSNVSSGKGTPVLPRNKLKGGGG. Over residues 651 to 663 the composition is skewed to polar residues; it reads HSGNKRSNVSSGK.

This sequence belongs to the krueppel C2H2-type zinc-finger protein family.

The protein localises to the nucleus. May be involved in transcriptional regulation. The protein is Zinc finger protein 574 (znf574) of Xenopus tropicalis (Western clawed frog).